The primary structure comprises 300 residues: Probable alpha-L-glutamate ligase (300 aa).

An ATP-grasp domain is found at 104 to 287; that stretch reads LQLLARQGID…IAGRMIQWIE (184 aa). ATP is bound by residues Lys141, 178-179, Asp187, and 211-213; these read EY and RSN. 3 residues coordinate Mg(2+): Asp248, Glu260, and Asn262. Residues Asp248, Glu260, and Asn262 each coordinate Mn(2+).

Belongs to the RimK family. Mg(2+) serves as cofactor. It depends on Mn(2+) as a cofactor.

This chain is Probable alpha-L-glutamate ligase, found in Citrobacter koseri (strain ATCC BAA-895 / CDC 4225-83 / SGSC4696).